The sequence spans 123 residues: Insulin-like peptide-1 (123 aa).

An N-terminal signal peptide occupies residues 1-24 (MTTSSYFLLVALGLLLYVCQSSFG). 4 disulfides stabilise this stretch: Cys-29–Cys-106, Cys-41–Cys-109, Cys-53–Cys-122, and Cys-108–Cys-113. Position 34 is a 4-hydroxyproline; partial (Pro-34). Residues 59 to 102 (EQGGANNARAYTGRTSSLMKRRGFLSLLKKRGKRDEGSLQRSGR) constitute a propeptide, c peptide. Glu-107 is subject to 4-carboxyglutamate. At Glu-117 the chain carries 4-carboxyglutamate; partial.

This sequence belongs to the insulin family. In terms of assembly, heterodimer of A and B chains; disulfide-linked. Expressed by the venom duct.

It is found in the secreted. Functionally, this venom insulin facilitates prey capture by rapidly inducing hypoglycemic shock. Intraperitoneal injection of this peptide into zebrafish lowers blood glucose with the same potency than human insulin. In vivo, when applied to water, this peptide reduces overall locomotor activity of zebrafish larvae, observed as a significant decrease in the percentage of time spent swimming and movement frequency. The protein is Insulin-like peptide-1 of Conus victoriae (Queen Victoria cone).